Here is a 120-residue protein sequence, read N- to C-terminus: Large ribosomal subunit protein uL18 (120 aa).

Residues 1–20 show a composition bias toward basic residues; that stretch reads MKSTRKSATQRRHRRLRRHL. Residues 1-26 are disordered; the sequence is MKSTRKSATQRRHRRLRRHLSGTSER.

Belongs to the universal ribosomal protein uL18 family. In terms of assembly, part of the 50S ribosomal subunit; part of the 5S rRNA/L5/L18/L25 subcomplex. Contacts the 5S and 23S rRNAs.

Its function is as follows. This is one of the proteins that bind and probably mediate the attachment of the 5S RNA into the large ribosomal subunit, where it forms part of the central protuberance. The polypeptide is Large ribosomal subunit protein uL18 (Synechocystis sp. (strain ATCC 27184 / PCC 6803 / Kazusa)).